Consider the following 237-residue polypeptide: Periplasmic deoxyribonuclease (237 aa).

Residues 1-27 (MSRPSRVLGLPLLSLGLTLLVSTPLQA) form the signal peptide.

It belongs to the EndA/NucM nuclease family.

Its subcellular location is the periplasm. Its function is as follows. Endonuclease which is capable of degrading plasmid DNA. This chain is Periplasmic deoxyribonuclease (dnsH), found in Aeromonas hydrophila.